A 412-amino-acid chain; its full sequence is Histone-lysine N-methyltransferase SUV39H1 (412 aa).

Residues 1–89 are interaction with SIRT1; that stretch reads MAENLKGCSV…LKCIRVLKQF (89 aa). The region spanning 43-101 is the Chromo domain; that stretch reads FEVEYLCDYKKIREQEYYLVKWRGYPDSENTWEPRQNLKCIRVLKQFHKDLERELVRRH. Residues 179–240 enclose the Pre-SET domain; the sequence is VGCECQDCLL…DCPNRVVQKG (62 aa). Cysteine 181, cysteine 183, cysteine 186, cysteine 194, cysteine 195, cysteine 222, cysteine 226, cysteine 228, and cysteine 232 together coordinate Zn(2+). Residues 243–366 enclose the SET domain; sequence YDLCIFRTND…AGEELTFDYN (124 aa). 254-256 is a binding site for S-adenosyl-L-methionine; the sequence is RGW. The mediates interaction with MECOM stretch occupies residues 255-377; that stretch reads GWGVRTLEKI…QVDPVDMEST (123 aa). Lysine 266 is subject to N6-acetyllysine. Residues tyrosine 297 and 323-324 each bind S-adenosyl-L-methionine; that span reads NH. Cysteine 326 serves as a coordination point for Zn(2+). A Phosphoserine modification is found at serine 391. The 17-residue stretch at 396–412 folds into the Post-SET domain; the sequence is VRIECKCGTTACRKYLF. 3 residues coordinate Zn(2+): cysteine 400, cysteine 402, and cysteine 407.

The protein belongs to the class V-like SAM-binding methyltransferase superfamily. Histone-lysine methyltransferase family. Suvar3-9 subfamily. In terms of assembly, interacts with CCAR2 and GFI1B. Component of the eNoSC complex, composed of SIRT1, SUV39H1 and RRP8. Interacts with H3 and H4 histones. Interacts with DNMT3B, CBX1, CBX4, MBD1, RUNX1, RUNX3, MYOD1, SMAD5 and RB1. Interacts with SBF1 through the SET domain. Interacts with HDAC1 and HDAC2 through the N-terminus and associates with the core histone deacetylase complex composed of HDAC1, HDAC2, RBBP4 and RBBP7. Interacts (via SET domain) with MECOM; enhances MECOM transcriptional repression activity. Interacts with LMNA; the interaction increases stability of SUV39H1. The large PER complex involved in the histone methylation is composed of at least PER2, CBX3, TRIM28, SUV39H1 and/or SUV39H2; CBX3 mediates the formation of the complex. Post-translationally, phosphorylated on serine residues, and to a lesser degree, on threonine residues. Acetylated at Lys-266, leading to inhibition of enzyme activity. SIRT1-mediated deacetylation relieves this inhibition. In terms of processing, ubiquitinated by the DCX(DCAF13) E3 ubiquitin ligase complex, leading to its degradation. In terms of tissue distribution, widely expressed.

The protein localises to the nucleus. It localises to the nucleus lamina. It is found in the nucleoplasm. Its subcellular location is the chromosome. The protein resides in the centromere. The catalysed reaction is L-lysyl(9)-[histone H3] + 3 S-adenosyl-L-methionine = N(6),N(6),N(6)-trimethyl-L-lysyl(9)-[histone H3] + 3 S-adenosyl-L-homocysteine + 3 H(+). With respect to regulation, negatively regulated by CCAR2. In terms of biological role, histone methyltransferase that specifically trimethylates 'Lys-9' of histone H3 using monomethylated H3 'Lys-9' as substrate. H3 'Lys-9' trimethylation represents a specific tag for epigenetic transcriptional repression by recruiting HP1 (CBX1, CBX3 and/or CBX5) proteins to methylated histones. Mainly functions in heterochromatin regions, thereby playing a central role in the establishment of constitutive heterochromatin at pericentric and telomere regions. H3 'Lys-9' trimethylation is also required to direct DNA methylation at pericentric repeats. SUV39H1 is targeted to histone H3 via its interaction with RB1 and is involved in many processes, such as repression of MYOD1-stimulated differentiation, regulation of the control switch for exiting the cell cycle and entering differentiation, repression by the PML-RARA fusion protein, BMP-induced repression, repression of switch recombination to IgA and regulation of telomere length. Component of the eNoSC (energy-dependent nucleolar silencing) complex, a complex that mediates silencing of rDNA in response to intracellular energy status and acts by recruiting histone-modifying enzymes. The eNoSC complex is able to sense the energy status of cell: upon glucose starvation, elevation of NAD(+)/NADP(+) ratio activates SIRT1, leading to histone H3 deacetylation followed by dimethylation of H3 at 'Lys-9' (H3K9me2) by SUV39H1 and the formation of silent chromatin in the rDNA locus. Recruited by the PER complex to the E-box elements of the circadian target genes such as PER2 itself or PER1, contributes to the conversion of local chromatin to a heterochromatin-like repressive state through H3 'Lys-9' trimethylation. The polypeptide is Histone-lysine N-methyltransferase SUV39H1 (Suv39h1) (Mus musculus (Mouse)).